A 504-amino-acid chain; its full sequence is Protein psiD (504 aa).

An N-terminal signal peptide occupies residues 1-21 (MKYSYLLLILLLSNLYKEGFS). 6 N-linked (GlcNAc...) asparagine glycosylation sites follow: Asn-87, Asn-136, Asn-236, Asn-252, Asn-290, and Asn-373. Residues 111-251 (LTRVGDSTYA…YDACGVCDGH (141 aa)) form the PA14 domain. The segment covering 417–430 (TVTPTVTPTVTPTP) has biased composition (low complexity). The disordered stretch occupies residues 417 to 453 (TVTPTVTPTVTPTPTTTPTPSPTTVPPRPTPTPLPAD). A compositionally biased stretch (pro residues) spans 431-453 (TTTPTPSPTTVPPRPTPTPLPAD). Asn-483 is a glycosylation site (N-linked (GlcNAc...) asparagine).

The protein belongs to the prespore-cell-inducing factor family.

Its subcellular location is the secreted. This chain is Protein psiD (psiD), found in Dictyostelium discoideum (Social amoeba).